The chain runs to 154 residues: MARMHSRRRGSSGSDRPTADEPPEWSEVDEDAIEDRVVELAEEGYDPSQIGLKLRDEGVQGVPVPDVKLATGKKVTEILEENDAENELPEDLRNLMERAIRLREHMDRNPGDAQNKRALQNTESKIRRLVDYYRGDKLDEEFTYSYEDAKDRLE.

Residues 1–10 show a composition bias toward basic residues; sequence MARMHSRRRG. Residues 1–32 form a disordered region; it reads MARMHSRRRGSSGSDRPTADEPPEWSEVDEDA. Positions 21–32 are enriched in acidic residues; sequence EPPEWSEVDEDA.

This sequence belongs to the universal ribosomal protein uS15 family. As to quaternary structure, part of the 30S ribosomal subunit.

In Natronomonas pharaonis (strain ATCC 35678 / DSM 2160 / CIP 103997 / JCM 8858 / NBRC 14720 / NCIMB 2260 / Gabara) (Halobacterium pharaonis), this protein is Small ribosomal subunit protein uS15.